The following is a 499-amino-acid chain: Glutamyl-tRNA(Gln) amidotransferase subunit A, mitochondrial (499 aa).

Residues lysine 61 and serine 139 each act as charge relay system in the active site. The Acyl-ester intermediate role is filled by serine 163.

This sequence belongs to the amidase family. GatA subfamily. In terms of assembly, subunit of the heterotrimeric GatCAB amidotransferase (AdT) complex, composed of A, B and C subunits.

The protein resides in the mitochondrion. The catalysed reaction is L-glutamyl-tRNA(Gln) + L-glutamine + ATP + H2O = L-glutaminyl-tRNA(Gln) + L-glutamate + ADP + phosphate + H(+). Allows the formation of correctly charged Gln-tRNA(Gln) through the transamidation of misacylated Glu-tRNA(Gln) in the mitochondria. The reaction takes place in the presence of glutamine and ATP through an activated gamma-phospho-Glu-tRNA(Gln). This is Glutamyl-tRNA(Gln) amidotransferase subunit A, mitochondrial from Coccidioides posadasii (strain C735) (Valley fever fungus).